Reading from the N-terminus, the 218-residue chain is Outer-membrane lipoprotein LolB (218 aa).

The first 24 residues, 1–24, serve as a signal peptide directing secretion; the sequence is MNNLSYLTKIPLIWVLLSVTLLSA. C25 carries the N-palmitoyl cysteine lipid modification. A lipid anchor (S-diacylglycerol cysteine) is attached at C25.

Belongs to the LolB family. In terms of assembly, monomer.

The protein resides in the cell outer membrane. Its function is as follows. Plays a critical role in the incorporation of lipoproteins in the outer membrane after they are released by the LolA protein. The polypeptide is Outer-membrane lipoprotein LolB (Shewanella sediminis (strain HAW-EB3)).